Consider the following 1083-residue polypeptide: MTAELQQDDAAGAADGHGSSCQMLLNQLREITGIQDPSFLHEALKASNGDITQAVSLLTDQRVKEPSHDTAATEPSEVEESATSKDLLAKVIDLTHDNKDDLQAAIALSLLESPNIQTDSRDLNRIHEANSAETKRSKRKRCEVWGENHNPNNWRRVDGWPVGLKNVGNTCWFSAVIQSLFQLPEFRRLVLSYSLPQNILENCRSHTEKRNIMFMQELQYLFALLLGSNRKFVDPSAALDLLKGAFRSSEEQQQDVSEFTHKLLDWLEDAFQLAVNVNSNPRTKSENPMVQLFYGTFLTEGVREGKPFCNNETFGQYPLQVNGYHNLDECLEGAMVEGDIALLPSDRSVKYGQERWFTKLPPVLTFELSRFEFNQSLGQPEKIHNKLEFPQVIYMDRYMYKSKELIRSKRESIRKLKEEIQVLQQKLERYVKYGSGPSRFPLPDMLKYVIEFASTKPASESCLSGSVEHMTLPLPSVHCPISDLTAKESSSPKSCSQNAEGSFSSPEDALPNSEVMNGPFTSPHSSLEMPAPPPAPRTVTDEEMNFVKTCLQRWRSEIEQDIQDLKNCISSTTQAIEQMYCDPLLRQVPYRLHAVLVHEGQASAGHYWAYIYNQPRQIWLKYNDISVTESSWEELERDSYGGLRNVSAYCLMYINDKLPHCSAEAAHGESDQTAEVEALSVELRQYIQEDNWRFEQEVEEWEEEQSCKIPQMESSPNSSSQDFSTSQESSAASSHGVRCLSSEHAVIAKEQTAQAIANTAHAYEKSGVEAALSEVMLSPAMQGVLLAIAKARQTFDRDGSEAGLIKAFHEEYSRLYQLAKETPTSHSDPRLQHVLVYFFQNEAPKRVVERTLLEQFADRNLSYDERSISIMKVAQAKLMEIGPEDMNMEEYKRWHEDYSLFRKVSVYLLTGLELFQKGKYQEALSYLVYAYQSNAGLLVKGPRRGVKESVIALYRRKCLLELNAKAASLFETNDDHSVTEGINVMNELIIPCIHLIINNDISKDDLDAIEVMRNHWCSYLGKDIAENLQLCLGEFLPRLLDPSAEIIVLKEPPTIRPNSPYDLCSRFAAVMESIQGVSTVTVK.

The disordered stretch occupies residues 60–82; sequence DQRVKEPSHDTAATEPSEVEESA. The residue at position 67 (S67) is a Phosphoserine. One can recognise a UIM domain in the interval 97 to 116; sequence DNKDDLQAAIALSLLESPNI. Residue K99 forms a Glycyl lysine isopeptide (Lys-Gly) (interchain with G-Cter in SUMO2) linkage. The region spanning 162 to 656 is the USP domain; sequence VGLKNVGNTC…SAYCLMYIND (495 aa). Residue C171 is the Nucleophile of the active site. S376 is modified (phosphoserine). The disordered stretch occupies residues 483–539; sequence DLTAKESSSPKSCSQNAEGSFSSPEDALPNSEVMNGPFTSPHSSLEMPAPPPAPRTV. Polar residues predominate over residues 487–505; it reads KESSSPKSCSQNAEGSFSS. S556 bears the Phosphoserine mark. H606 (proton acceptor) is an active-site residue. A disordered region spans residues 703–728; the sequence is EEQSCKIPQMESSPNSSSQDFSTSQE. The segment covering 714–728 has biased composition (low complexity); it reads SSPNSSSQDFSTSQE. S720 carries the phosphoserine modification. T1054 carries the phosphothreonine modification.

Belongs to the peptidase C19 family. USP28 subfamily. As to quaternary structure, interacts with ZNF304. Interacts with PRKD1. Interacts with TP53BP1. Interacts with FBXW7; following DNA damage, dissociates from FBXW7 leading to degradation of MYC. Degraded upon nickel ion level or hypoxia exposure. Post-translationally, phosphorylated upon DNA damage at Ser-67 and Ser-720, by ATM or ATR. Phosphorylated by PRKD1.

The protein resides in the nucleus. It localises to the nucleoplasm. The enzyme catalyses Thiol-dependent hydrolysis of ester, thioester, amide, peptide and isopeptide bonds formed by the C-terminal Gly of ubiquitin (a 76-residue protein attached to proteins as an intracellular targeting signal).. Its function is as follows. Deubiquitinase involved in DNA damage response checkpoint and MYC proto-oncogene stability. Involved in DNA damage induced apoptosis by specifically deubiquitinating proteins of the DNA damage pathway such as CLSPN. Also involved in G2 DNA damage checkpoint, by deubiquitinating CLSPN, and preventing its degradation by the anaphase promoting complex/cyclosome (APC/C). In contrast, it does not deubiquitinate PLK1. Specifically deubiquitinates MYC in the nucleoplasm, leading to prevent MYC degradation by the proteasome: acts by specifically interacting with FBXW7 (FBW7alpha) in the nucleoplasm and counteracting ubiquitination of MYC by the SCF(FBXW7) complex. Deubiquitinates ZNF304, hence preventing ZNF304 degradation by the proteasome and leading to the activated KRAS-mediated promoter hypermethylation and transcriptional silencing of tumor suppressor genes (TSGs) in a subset of colorectal cancers (CRC) cells. This is Ubiquitin carboxyl-terminal hydrolase 28 (Usp28) from Rattus norvegicus (Rat).